Here is a 620-residue protein sequence, read N- to C-terminus: Protein NRT1/ PTR FAMILY 2.13 (620 aa).

Residues 1–32 are disordered; that stretch reads MVLEDRKDGSSLPGRSGSFSKSSPSELDVVDP. A compositionally biased stretch (low complexity) spans 10–25; that stretch reads SSLPGRSGSFSKSSPS. 12 helical membrane-spanning segments follow: residues 70 to 90, 95 to 115, 126 to 146, 167 to 187, 213 to 233, 241 to 261, 364 to 384, 402 to 422, 443 to 463, 485 to 505, 524 to 544, and 568 to 588; these read LGSI…FHLE, ANVI…GAYI, IAFA…TASF, KLQI…SGGI, FFNW…TVVV, WIIG…MFFA, IVPI…QGTF, IPAG…LPFY, LQRI…AGIV, VFWL…NIIG, SLFS…VTVV, and YFYY…WYCA.

The protein belongs to the major facilitator superfamily. Proton-dependent oligopeptide transporter (POT/PTR) (TC 2.A.17) family. In terms of assembly, interacts with NLA. Post-translationally, ubiquitinated by NLA. Ubiquitination of NPF2.13 leads to its degradation by the proteasome. Expressed in leaves and flowers. Detected in stems and siliques. Highest expression in the distal lamina of older leaves. Restricted to the sieve element and companion cell complex of the minor vein.

It localises to the cell membrane. Low-affinity proton-dependent nitrate transporter. Not involved in dipeptides transport, but has a weak glucosinolate transport activity. Involved in phloem loading and nitrate remobilization from the older leaves to other tissues. The polypeptide is Protein NRT1/ PTR FAMILY 2.13 (NPF2.13) (Arabidopsis thaliana (Mouse-ear cress)).